A 528-amino-acid chain; its full sequence is MAGCRLWVSLLLAAALACLATALWPWPQYIQTSHRRYTLYPNNFQFRYHAGSAAQAGCVVLDEAFRRYRSLLFGSGSWPRPSFSKKQQPLGKNILMVSVVTAECNEFPNLESVENYTLTINDDQCLLSSETVWGALRGLETFSQLVWKSAEGTFFINKTKITDFPRFPHRGILLDTSRHYLPLSSILNTLDVMAYNKFNVFHWHLVDDSSFPYESFTFPELTRKGSFNPVTHIYTAQDVKEVIEYARLRGIRVLAEFDTPGHTLSWGAGVPGLLTPCYSGSRLSGTYGPVNPSLNSTYDFMSTFFLEISSVFPDFYLHLGGDEVDFTCWKSNPNIQAFMKKKGFTDYKQLESFYIQTLLDIVSDYDKGYVVWQEVFDNKVKVRPDTIIQVWREEMPVQYMKEIEAITQAGFRALLSAPWYLNRVKYGPDWKEMYKVEPLAFRGTPAQKALVIGGEACMWGEYVDSTNLVPRLWPRAGAIAERLWSSNLTTNMDFAFKRLSHFRCELLRRGIQAQPISVGYCEQEFEHT.

The N-terminal stretch at 1–22 (MAGCRLWVSLLLAAALACLATA) is a signal peptide. The propeptide occupies 23–88 (LWPWPQYIQT…PRPSFSKKQQ (66 aa)). Cysteine 58 and cysteine 104 are joined by a disulfide. N-linked (GlcNAc...) asparagine glycosylation is found at asparagine 115, asparagine 157, and asparagine 295. A disulfide bridge connects residues cysteine 277 and cysteine 328. The Proton donor role is filled by glutamate 323. The segment at 422–423 (NR) is critical for hydrolysis GM2 gangliosides. N-linked (GlcNAc...) asparagine glycosylation occurs at asparagine 487. Cysteine 504 and cysteine 521 are disulfide-bonded.

Belongs to the glycosyl hydrolase 20 family. There are 3 beta-hexosaminidase isozymes: isozyme A (hexosaminidase A) is a heterodimer composed of one subunit alpha and one subunit beta (chain A and B); isozyme B (hexosaminidase B) is a homodimer of two beta subunits (two chains A and B); isozyme S (hexosaminidase S) is a homodimer of two alpha subunits. The composition of the dimer (isozyme A versus isozyme S) has a significant effect on the substrate specificity of the alpha subunit active site.

Its subcellular location is the lysosome. The catalysed reaction is Hydrolysis of terminal non-reducing N-acetyl-D-hexosamine residues in N-acetyl-beta-D-hexosaminides.. It catalyses the reaction N-acetyl-beta-D-galactosaminyl-(1-&gt;4)-beta-D-3-sulfogalactosyl-(1-&gt;4)-beta-D-glucosyl-(1&lt;-&gt;1')-ceramide + H2O = a beta-D-3-sulfogalactosyl-(1-&gt;4)-beta-D-glucosyl-(1&lt;-&gt;1')-ceramide + N-acetyl-beta-D-galactosamine. It carries out the reaction a ganglioside GM2 (d18:1(4E)) + H2O = a ganglioside GM3 (d18:1(4E)) + N-acetyl-beta-D-galactosamine. The enzyme catalyses a ganglioside GM2 + H2O = a ganglioside GM3 + N-acetyl-beta-D-galactosamine. The catalysed reaction is beta-D-GalNAc-(1-&gt;4)-alpha-L-IdoA-(1-&gt;3)-beta-D-GalNAc-4-sulfate-(1-&gt;4)-alpha-L-IdoA-(1-&gt;3)-D-GalNAc-4-sulfate + H2O = alpha-L-IdoA-(1-&gt;3)-beta-D-GalNAc-4-sulfate-(1-&gt;4)-alpha-L-IdoA-(1-&gt;3)-D-GalNAc-4-sulfate + N-acetyl-D-galactosamine. It catalyses the reaction N-acetyl-beta-D-6-sulfogalactosaminyl-(1-&gt;4)-alpha-L-iduronyl-(1-&gt;3)-N-acetyl-D-6-sulfogalactosamine + H2O = alpha-L-iduronyl-(1-&gt;3)-N-acetyl-D-6-sulfogalactosamine + N-acetyl-D-6-sulfogalactosamine. Addition of GM2A stimulates the hydrolysis of sulfated glycosphingolipid SM2 and the ganglioside GM2. In terms of biological role, hydrolyzes the non-reducing end N-acetyl-D-hexosamine and/or sulfated N-acetyl-D-hexosamine of glycoconjugates, such as the oligosaccharide moieties from proteins and neutral glycolipids, or from certain mucopolysaccharides. The isozyme S is as active as the isozyme A on the anionic bis-sulfated glycans, the chondroitin-6-sulfate trisaccharide (C6S-3), and the dermatan sulfate pentasaccharide, and the sulfated glycosphingolipid SM2. The isozyme B does not hydrolyze each of these substrates, however hydrolyzes efficiently neutral oligosaccharide. Only the isozyme A is responsible for the degradation of GM2 gangliosides in the presence of GM2A. This Rattus norvegicus (Rat) protein is Beta-hexosaminidase subunit alpha.